The following is a 280-amino-acid chain: 23S rRNA (guanine(748)-N(1))-methyltransferase (280 aa).

Zn(2+) contacts are provided by Cys11, Cys14, Cys27, and His31. S-adenosyl-L-methionine-binding positions include Tyr70, 100–101, and His188; that span reads TG.

Belongs to the methyltransferase superfamily. RlmA family.

The catalysed reaction is guanosine(748) in 23S rRNA + S-adenosyl-L-methionine = N(1)-methylguanosine(748) in 23S rRNA + S-adenosyl-L-homocysteine + H(+). In terms of biological role, specifically methylates the guanosine in position 748 of 23S rRNA. Confers resistance to the macrolide antibiotic tylosine. The protein is 23S rRNA (guanine(748)-N(1))-methyltransferase (rlmAII) of Streptomyces fradiae (Streptomyces roseoflavus).